The chain runs to 584 residues: Actin-binding protein IPP (584 aa).

Residues 37–104 (CDVQLQVGQE…IYTGIVNIGV (68 aa)) enclose the BTB domain. Kelch repeat units follow at residues 289–343 (YLYA…VLGG), 344–390 (MVYA…VCYG), 391–437 (AIYA…EMQG), 439–485 (IYVI…ALND), 487–533 (IYSV…AVNG), and 535–583 (LYVS…GVAV).

The protein localises to the cytoplasm. It localises to the cytoskeleton. In terms of biological role, may play a role in organizing the actin cytoskeleton. The polypeptide is Actin-binding protein IPP (IPP) (Homo sapiens (Human)).